Here is a 472-residue protein sequence, read N- to C-terminus: FAD-dependent monooxygenase ltmM (472 aa).

The helical transmembrane segment at 7 to 27 (VIIVGGSVAGLSLAHCLEKIG) threads the bilayer. Residues Glu-34, Gly-48, and Arg-107 each contribute to the FAD site. The N-linked (GlcNAc...) asparagine glycan is linked to Asn-186. Residues Asp-306 and Ala-319 each coordinate FAD. Residues 450–470 (IVYALYLVAAAAFILYCLSSL) form a helical membrane-spanning segment.

This sequence belongs to the paxM FAD-dependent monooxygenase family. The cofactor is FAD.

The protein resides in the membrane. Its pathway is secondary metabolite biosynthesis. Functionally, FAD-dependent monooxygenase; part of the gene cluster that mediates the biosynthesis of lolitrems, indole-diterpene mycotoxins that are potent tremorgens in mammals, and are synthesized by clavicipitaceous fungal endophytes in association with their grass hosts. The geranylgeranyl diphosphate (GGPP) synthase ltmG is proposed to catalyze the first step in lolitrem biosynthesis. LtmG catalyzes a series of iterative condensations of isopentenyl diphosphate (IPP) with dimethylallyl diphosphate (DMAPP), geranyl diphosphate (GPP), and farnesyl diphosphate (FPP), to form GGPP. GGPP then condenses with indole-3-glycerol phosphate to form 3-geranylgeranylindole, an acyclic intermediate, to be incorporated into paxilline. Either ltmG or ltmC could be responsible for this step, as both are putative prenyl transferases. The FAD-dependent monooxygenase ltmM then catalyzes the epoxidation of the two terminal alkenes of the geranylgeranyl moiety, which is subsequently cyclized by ltmC, to paspaline. The cytochrome P450 monooxygenases ltmQ and ltmP can sequentially oxidize paspaline to terpendole E and terpendole F. Alternatively, ltmP converts paspaline to an intermediate which is oxidized by ltmQ to terpendole F. LtmF, ltmK, ltmE and ltmJ appear to be unique to the epichloe endophytes. The prenyltransferase ltmF is involved in the 27-hydroxyl-O-prenylation. The cytochrome P450 monooxygenase ltmK is required for the oxidative acetal ring formation. The multi-functional prenyltransferase ltmE is required for C20- and C21-prenylations of the indole ring of paspalanes and acts together with the cytochrome P450 monooxygenase ltmJ to yield lolitremanes by multiple oxidations and ring closures. The stereoisomer pairs of lolitriol and lolitrem N or lolitrem B and lolitrem F may be attributed to variations in the way in which ring closure can occur under the action of ltmJ. While the major product of this pathway is lolitrem B, the prenyl transferases and cytochrome P450 monooxygenases identified in this pathway have a remarkable versatility in their regio- and stereo-specificities to generate a diverse range of metabolites that are products of a metabolic grid rather than a linear pathway. The protein is FAD-dependent monooxygenase ltmM (ltmM) of Epichloe festucae (strain Fl1).